The chain runs to 80 residues: Myrmicitoxin(1)-Pr1a (80 aa).

A signal peptide spans 1-23; that stretch reads MEIPKLLYIAVIAIGLSGSLTWA. The propeptide occupies 24 to 57; that stretch reads TPLANPLAEAEAEAKATAEATAEALAEALAEPEP. Position 79 is a phenylalanine amide (phenylalanine 79).

The protein belongs to the formicidae venom clade 1 family. As to expression, expressed by the venom gland.

It localises to the secreted. Its function is as follows. Vertebrate-selective toxin that causes pain by targeting voltage-gated sodium channels. The polypeptide is Myrmicitoxin(1)-Pr1a (Pogonomyrmex rugosus (Desert harvester ant)).